A 491-amino-acid chain; its full sequence is Proline--tRNA ligase (491 aa).

The protein belongs to the class-II aminoacyl-tRNA synthetase family. ProS type 3 subfamily. Homodimer.

The protein localises to the cytoplasm. It carries out the reaction tRNA(Pro) + L-proline + ATP = L-prolyl-tRNA(Pro) + AMP + diphosphate. Its function is as follows. Catalyzes the attachment of proline to tRNA(Pro) in a two-step reaction: proline is first activated by ATP to form Pro-AMP and then transferred to the acceptor end of tRNA(Pro). This chain is Proline--tRNA ligase, found in Halorubrum lacusprofundi (strain ATCC 49239 / DSM 5036 / JCM 8891 / ACAM 34).